Reading from the N-terminus, the 1105-residue chain is MAAMAPALTDAAAEAHHIRFKLAPPSSTLSPGSAENNGNANILIAANGTKRKAIAAEDPSLDFRNNPTKEDLGKLQPLVASYLCSDVTSVPSKESLKLQGVFSKQTVLKSHPLLSQSYELRAELLGRQPVLEFSLENLRTMNTSGQTALPQAPVNGLAKKLTKSSTHSDHDNSTSLNGGKRALTSSALHGGEMGGSESGDLKGGMTNCTLPHRSLDVEHTTLYSNNSTANKSSVNSMEQPALQGSSRLSPGTDSSSNLGGVKLEGKKSPLSSILFSALDSDTRITALLRRQADIESRARRLQKRLQVVQAKQVERHIQHQLGGFLEKTLSKLPNLESLRPRSQLMLTRKAEAALRKAASETTTSEGLSNFLKSNSISEELERFTASGIANLRCSEQAFDSDVTDSSSGGESDIEEEELTRADPEQRHVPLRRRSEWKWAADRAAIVSRWNWLQAHVSDLEYRIRQQTDIYKQIRANKGLIVLGEVPPPEHTTDLFLPLSSEVKTDHGTDKLIESVSQPLENHGAPIIGHISESLSTKSCGALRPVNGVINTLQPVLADHIPGDSSDAEEQLHKKQRLNLVSSSSDGTCVAARTRPVLSCKKRRLVRPNSIVPLSKKVHRNSTIRPGCDVNPSCALCGSGSINTMPPEIHYEAPLLERLSQLDSCVHPVLAFPDDVPTSLHFQSMLKSQWQNKPFDKIKPPKKLSLKHRAPMPGSLPDSARKDRHKLVSSFLTTAKLSHHQTRPDRTHRQHLDDVGAVPMVERVTAPKAERLLNPPPPVHDPNHSKMRLRDHSSERSEVLKHHTDMSSSSYLAATHHPPHSPLVRQLSTSSDSPAPASSSSQVTASTSQQPVRRRRGESSFDINNIVIPMSVAATTRVEKLQYKEILTPSWREVDLQSLKGSPDEENEEIEDLSDAAFAALHAKCEEMERARWLWTTSVPPQRRGSRSYRSSDGRTTPQLGSANPSTPQPASPDVSSSHSLSEYSHGQSPRSPISPELHSAPLTPVARDTPRHLASEDTRCSTPELGLDEQSVQPWERRTFPLAHSPQAECEDQLDAQERAARCTRRTSGSKTGRETEAAPTSPPIVPLKSRHLVAAATAQRPTHR.

Position 104 is an N6-acetyllysine (Lys-104). 2 disordered regions span residues 145 to 211 and 225 to 263; these read GQTA…CTLP and NNST…GVKL. Polar residues predominate over residues 225 to 258; it reads NNSTANKSSVNSMEQPALQGSSRLSPGTDSSSNL. Ser-249 is modified (phosphoserine). A Glycyl lysine isopeptide (Lys-Gly) (interchain with G-Cter in SUMO2) cross-link involves residue Lys-262. The residue at position 268 (Ser-268) is a Phosphoserine. A coiled-coil region spans residues 283–314; that stretch reads RITALLRRQADIESRARRLQKRLQVVQAKQVE. Lys-331 participates in a covalent cross-link: Glycyl lysine isopeptide (Lys-Gly) (interchain with G-Cter in SUMO2). Disordered regions lie at residues 399–426 and 733–857; these read DSDV…PEQR and TAKL…RRGE. 2 stretches are compositionally biased toward basic and acidic residues: residues 741–753 and 780–804; these read TRPD…HLDD and DPNH…HHTD. Low complexity predominate over residues 827–850; the sequence is STSSDSPAPASSSSQVTASTSQQP. Residues 850 to 882 are required for activation of KAT8 histone acetyltransferase activity; it reads PVRRRRGESSFDINNIVIPMSVAATTRVEKLQY. Positions 884–1035 constitute a PEHE domain; that stretch reads EILTPSWREV…GLDEQSVQPW (152 aa). The interaction with KAT8 HAT domain stretch occupies residues 910–928; the sequence is EDLSDAAFAALHAKCEEME. Residues 938 to 1034 are disordered; that stretch reads VPPQRRGSRS…LGLDEQSVQP (97 aa). Residues 955–965 are compositionally biased toward polar residues; sequence TTPQLGSANPS. The span at 975–988 shows a compositional bias: low complexity; that stretch reads SSSHSLSEYSHGQS. Phosphoserine is present on residues Ser-991 and Ser-994. Thr-1003 bears the Phosphothreonine mark. The span at 1008–1019 shows a compositional bias: basic and acidic residues; it reads DTPRHLASEDTR. Ser-1045 is subject to Phosphoserine. Residues 1058–1105 form a disordered region; that stretch reads ERAARCTRRTSGSKTGRETEAAPTSPPIVPLKSRHLVAAATAQRPTHR.

In terms of assembly, component of the NSL complex at least composed of MOF/KAT8, KANSL1, KANSL2, KANSL3, MCRS1, PHF20, OGT1/OGT, WDR5 and HCFC1. Interacts (via PEHE domain) with KAT8 (via HAT domain); the interaction is direct. Component of some MLL1/MLL complex, at least composed of the core components KMT2A/MLL1, ASH2L, HCFC1, WDR5 and RBBP5, as well as the facultative components BACC1, CHD8, E2F6, HSP70, INO80C, KANSL1, LAS1L, MAX, MCRS1, MGA, KAT8/MOF, PELP1, PHF20, PRP31, RING2, RUVB1/TIP49A, RUVB2/TIP49B, SENP3, TAF1, TAF4, TAF6, TAF7, TAF9 and TEX10. As to expression, expressed in the brain.

It localises to the nucleus. It is found in the chromosome. Its subcellular location is the centromere. The protein localises to the kinetochore. The protein resides in the mitochondrion. It localises to the cytoplasm. It is found in the cytoskeleton. Its subcellular location is the spindle pole. In terms of biological role, non-catalytic component of the NSL histone acetyltransferase complex, a multiprotein complex that mediates histone H4 acetylation at 'Lys-5'- and 'Lys-8' (H4K5ac and H4K8ac) at transcription start sites and promotes transcription initiation. The NSL complex also acts as a regulator of gene expression in mitochondria. In addition to its role in transcription, KANSL1 also plays an essential role in spindle assembly during mitosis. Associates with microtubule ends and contributes to microtubule stability. The sequence is that of KAT8 regulatory NSL complex subunit 1 (KANSL1) from Homo sapiens (Human).